The chain runs to 233 residues: Transmembrane protein 182 (233 aa).

An N-terminal signal peptide occupies residues 1–26; it reads MKLSVGIFFGGLFAALGVLLFLVAFG. The Extracellular portion of the chain corresponds to 27–117; sequence TDYWLLATEI…SYDSAVIYRG (91 aa). The tract at residues 52–62 is interaction with ITGB1; sequence TFHHEGFFWRC. N-linked (GlcNAc...) asparagine glycosylation is found at Asn88 and Asn105. Residues 118 to 138 traverse the membrane as a helical segment; sequence FWTVLMLLGVITIVMASFLII. Residues 139–153 lie on the Cytoplasmic side of the membrane; the sequence is CAAPFASHILYKAGG. A helical membrane pass occupies residues 154–174; it reads GFYILAGVLFSLVVVMYVIWV. The Extracellular segment spans residues 175-203; that stretch reads QAMADLENYTNMKKMDCPDFAVYVRYGWS. The helical transmembrane segment at 204–224 threads the bilayer; sequence FMLAPIGVFFALLAGMLFLLV. The Cytoplasmic segment spans residues 225-233; it reads GRAIYLNSD.

Belongs to the TMEM182 family. Interacts with ITGB1. In terms of tissue distribution, expressed in skeletal muscle and adipose tissue.

Its subcellular location is the cell membrane. Functionally, negatively regulates myogenesis and skeletal muscle regeneration via its association with ITGB1. Modulates ITGB1 activation by decreasing ITGB1-LAMB1 interaction and inhibiting ITGB1-mediated intracellular signaling during myogenesis. This chain is Transmembrane protein 182 (TMEM182), found in Gallus gallus (Chicken).